Reading from the N-terminus, the 204-residue chain is dITP/XTP pyrophosphatase (204 aa).

Position 7 to 12 (7 to 12 (TNNKDK)) interacts with substrate. Residues Asp38 and Asp74 each contribute to the Mg(2+) site. The Proton acceptor role is filled by Asp74. Substrate-binding positions include Ser75, 156–159 (FGYD), Lys179, and 184–185 (HR).

It belongs to the HAM1 NTPase family. As to quaternary structure, homodimer. Requires Mg(2+) as cofactor.

It carries out the reaction XTP + H2O = XMP + diphosphate + H(+). The catalysed reaction is dITP + H2O = dIMP + diphosphate + H(+). The enzyme catalyses ITP + H2O = IMP + diphosphate + H(+). Its function is as follows. Pyrophosphatase that catalyzes the hydrolysis of nucleoside triphosphates to their monophosphate derivatives, with a high preference for the non-canonical purine nucleotides XTP (xanthosine triphosphate), dITP (deoxyinosine triphosphate) and ITP. Seems to function as a house-cleaning enzyme that removes non-canonical purine nucleotides from the nucleotide pool, thus preventing their incorporation into DNA/RNA and avoiding chromosomal lesions. The chain is dITP/XTP pyrophosphatase from Campylobacter fetus subsp. fetus (strain 82-40).